A 366-amino-acid chain; its full sequence is Peptide chain release factor 2 (366 aa).

Residue Q251 is modified to N5-methylglutamine.

The protein belongs to the prokaryotic/mitochondrial release factor family. Methylated by PrmC. Methylation increases the termination efficiency of RF2.

It localises to the cytoplasm. In terms of biological role, peptide chain release factor 2 directs the termination of translation in response to the peptide chain termination codons UGA and UAA. The protein is Peptide chain release factor 2 of Exiguobacterium sp. (strain ATCC BAA-1283 / AT1b).